The sequence spans 428 residues: 3-phosphoshikimate 1-carboxyvinyltransferase (428 aa).

3-phosphoshikimate is bound by residues Lys-21, Ser-22, and Arg-26. Residue Lys-21 coordinates phosphoenolpyruvate. Gly-91 and Arg-119 together coordinate phosphoenolpyruvate. 3-phosphoshikimate-binding residues include Ser-164, Gln-166, Asp-313, and Lys-340. Gln-166 serves as a coordination point for phosphoenolpyruvate. Residue Asp-313 is the Proton acceptor of the active site. Phosphoenolpyruvate is bound by residues Arg-344 and Arg-386.

The protein belongs to the EPSP synthase family. In terms of assembly, monomer.

It localises to the cytoplasm. The catalysed reaction is 3-phosphoshikimate + phosphoenolpyruvate = 5-O-(1-carboxyvinyl)-3-phosphoshikimate + phosphate. It functions in the pathway metabolic intermediate biosynthesis; chorismate biosynthesis; chorismate from D-erythrose 4-phosphate and phosphoenolpyruvate: step 6/7. Its function is as follows. Catalyzes the transfer of the enolpyruvyl moiety of phosphoenolpyruvate (PEP) to the 5-hydroxyl of shikimate-3-phosphate (S3P) to produce enolpyruvyl shikimate-3-phosphate and inorganic phosphate. The polypeptide is 3-phosphoshikimate 1-carboxyvinyltransferase (Campylobacter jejuni subsp. jejuni serotype O:2 (strain ATCC 700819 / NCTC 11168)).